The chain runs to 236 residues: Baculoviral IAP repeat-containing protein 8 (236 aa).

A BIR repeat occupies 7-70 (RLITFGTWMY…KWYPGCKYLL (64 aa)). Zn(2+) contacts are provided by cysteine 39, cysteine 42, histidine 59, and cysteine 66. Residues 189–224 (CKICMDRHIAVVFIPCGHLVTCKQCAEAVDRCPMCS) form an RING-type zinc finger.

Belongs to the IAP family. Binds to caspase-9. In terms of tissue distribution, testis specific in normal tissues.

Its subcellular location is the cytoplasm. Functionally, protects against apoptosis mediated by BAX. In Homo sapiens (Human), this protein is Baculoviral IAP repeat-containing protein 8 (BIRC8).